Here is a 279-residue protein sequence, read N- to C-terminus: Esterase CG5412 (279 aa).

Catalysis depends on charge relay system residues Ser-133, Asp-191, and His-218. Residues 249-279 (QSGNASFVDSGAEDDNDAEVAAMTAELDESD) form a disordered region.

It belongs to the LovG family.

In Drosophila melanogaster (Fruit fly), this protein is Esterase CG5412.